Here is a 120-residue protein sequence, read N- to C-terminus: Secreted RxLR effector protein 29 (120 aa).

Positions 1 to 21 (MRRTAFIVLSLVALIAPCVTS) are cleaved as a signal peptide. The short motif at 47 to 64 (RHLRSEANGRLAVVDEEK) is the RxLR-dEER element.

Belongs to the RxLR effector family.

It is found in the secreted. The protein localises to the host cytoplasm. Its subcellular location is the host nucleus. Its function is as follows. Effector that acts as a broad suppressor of cell death to interrupt plant immunity. Inhibits cell death induced by cell death-inducing proteins, including the PAMP elicitor INF1 from P.infestans. In Plasmopara viticola (Downy mildew of grapevine), this protein is Secreted RxLR effector protein 29.